Consider the following 36-residue polypeptide: Photosystem I reaction center subunit VIII (36 aa).

The helical transmembrane segment at 9–29 (IFVPLVGLVFPAVAMASLFLY) threads the bilayer.

It belongs to the PsaI family.

The protein localises to the plastid. It localises to the chloroplast thylakoid membrane. Its function is as follows. May help in the organization of the PsaL subunit. The protein is Photosystem I reaction center subunit VIII of Ostreococcus tauri.